A 133-amino-acid chain; its full sequence is Peptide methionine sulfoxide reductase MsrB (133 aa).

The region spanning 8 to 130 (LEEWRAMLDP…NSVCLDFKPR (123 aa)) is the MsrB domain. 4 residues coordinate Zn(2+): Cys-47, Cys-50, Cys-96, and Cys-99. Cys-119 acts as the Nucleophile in catalysis.

The protein belongs to the MsrB Met sulfoxide reductase family. Zn(2+) serves as cofactor.

The enzyme catalyses L-methionyl-[protein] + [thioredoxin]-disulfide + H2O = L-methionyl-(R)-S-oxide-[protein] + [thioredoxin]-dithiol. The sequence is that of Peptide methionine sulfoxide reductase MsrB from Pseudomonas putida (strain W619).